The sequence spans 229 residues: NAD(P)H-quinone oxidoreductase subunit K, chloroplastic (229 aa).

4 residues coordinate [4Fe-4S] cluster: C43, C44, C108, and C139.

It belongs to the complex I 20 kDa subunit family. In terms of assembly, NDH is composed of at least 16 different subunits, 5 of which are encoded in the nucleus. Requires [4Fe-4S] cluster as cofactor.

It is found in the plastid. It localises to the chloroplast thylakoid membrane. It catalyses the reaction a plastoquinone + NADH + (n+1) H(+)(in) = a plastoquinol + NAD(+) + n H(+)(out). The catalysed reaction is a plastoquinone + NADPH + (n+1) H(+)(in) = a plastoquinol + NADP(+) + n H(+)(out). In terms of biological role, NDH shuttles electrons from NAD(P)H:plastoquinone, via FMN and iron-sulfur (Fe-S) centers, to quinones in the photosynthetic chain and possibly in a chloroplast respiratory chain. The immediate electron acceptor for the enzyme in this species is believed to be plastoquinone. Couples the redox reaction to proton translocation, and thus conserves the redox energy in a proton gradient. This Piper cenocladum (Ant piper) protein is NAD(P)H-quinone oxidoreductase subunit K, chloroplastic.